A 269-amino-acid chain; its full sequence is LOB domain-containing protein 6 (269 aa).

One can recognise an LOB domain in the interval 37 to 138 (SPCAACKFLR…QDLARAKFEL (102 aa)).

Belongs to the LOB domain-containing protein family.

The protein resides in the nucleus. Functionally, negative regulator of cell proliferation in the adaxial side of leaves. Regulates the formation of a symmetric lamina and the establishment of venation. The sequence is that of LOB domain-containing protein 6 (LBD6) from Oryza sativa subsp. indica (Rice).